We begin with the raw amino-acid sequence, 459 residues long: Vasoactive intestinal polypeptide receptor 1 (459 aa).

Residues 1–30 (MRPPSLPPARWLCVLAGALACALGPAGSRA) form the signal peptide. Topologically, residues 31–142 (ASPHQECEYL…EQQQTEFYDA (112 aa)) are extracellular. 5 cysteine pairs are disulfide-bonded: C37-C209, C50-C72, C63-C105, C86-C122, and C216-C286. Residues N58, N69, N100, and N104 are each glycosylated (N-linked (GlcNAc...) asparagine). The chain crosses the membrane as a helical span at residues 143–167 (VKTGYTIGYSLSLASLLVAMAILSL). Residues 168 to 175 (FRKLHCTR) are Cytoplasmic-facing. A helical transmembrane segment spans residues 176–197 (NYIHMHLFMSFILRATAVFIKD). The Extracellular segment spans residues 198 to 217 (MALFNNGETDHCSEASVSCK). Residues 218–242 (AAVVFFQYCVMANFFWLLVEGLYLH) form a helical membrane-spanning segment. At 243–255 (TLLAVSFFSERKY) the chain is on the cytoplasmic side. The helical transmembrane segment at 256 to 277 (FWGYILIGWGVPSVFIMIWTIV) threads the bilayer. The Extracellular portion of the chain corresponds to 278-293 (RIHFEDFGCWDTIINS). The N-linked (GlcNAc...) asparagine glycan is linked to N292. The helical transmembrane segment at 294-318 (SLWWIIKGPILISILVNFILFICII) threads the bilayer. Residues 319–340 (RILVQKLRPPDIGKNDSSPYSR) lie on the Cytoplasmic side of the membrane. The chain crosses the membrane as a helical span at residues 341 to 361 (LAKSTLLLIPLFGVHYVMFAF). The Extracellular segment spans residues 362-369 (FPDNFKAQ). The chain crosses the membrane as a helical span at residues 370 to 393 (VKMVFELVVGSFQGFVVAILYCFL). Over 394–459 (NGEVQAELRR…SSFQAEVSLV (66 aa)) the chain is Cytoplasmic.

The protein belongs to the G-protein coupled receptor 2 family. As to quaternary structure, interacts with ADCYAP1/PACAP; activated by both PACAP27 and PACAP38 neuropeptides. Interacts with VIP; the interaction results in VIPR1 activation.

It is found in the cell membrane. In terms of biological role, g protein-coupled receptor activated by the neuropeptides vasoactive intestinal peptide (VIP) and pituitary adenylate cyclase-activating polypeptide (ADCYAP1/PACAP). Binds VIP and both PACAP27 and PACAP38 bioactive peptides with the following order of ligand affinity VIP = PACAP27 &gt; PACAP38. Ligand binding causes a conformation change that triggers signaling via guanine nucleotide-binding proteins (G proteins) and modulates the activity of downstream effectors. Activates cAMP-dependent pathway. The sequence is that of Vasoactive intestinal polypeptide receptor 1 from Mus musculus (Mouse).